We begin with the raw amino-acid sequence, 361 residues long: Thermostable alkaline protease (361 aa).

Residues Met1–Ala24 form the signal peptide. Positions Ser25–Ser93 are excised as a propeptide. Gln94 lines the Ca(2+) pocket. One can recognise a Peptidase S8 domain in the interval Pro97–Thr360. The active-site Charge relay system is the Asp124. Asp132 is a binding site for Ca(2+). The Charge relay system role is filled by His154. Leu165, Asn167, Ile169, Val171, Ala255, Tyr257, and Val260 together coordinate Ca(2+). Ser307 serves as the catalytic Charge relay system.

Belongs to the peptidase S8 family. The cofactor is Ca(2+).

It is found in the secreted. In terms of biological role, shows keratinolytic activity. The protein is Thermostable alkaline protease of Halalkalibacterium halodurans (strain ATCC BAA-125 / DSM 18197 / FERM 7344 / JCM 9153 / C-125) (Bacillus halodurans).